The chain runs to 351 residues: Phosphoribosylformylglycinamidine cyclo-ligase (351 aa).

The protein belongs to the AIR synthase family.

The protein resides in the cytoplasm. The catalysed reaction is 2-formamido-N(1)-(5-O-phospho-beta-D-ribosyl)acetamidine + ATP = 5-amino-1-(5-phospho-beta-D-ribosyl)imidazole + ADP + phosphate + H(+). It functions in the pathway purine metabolism; IMP biosynthesis via de novo pathway; 5-amino-1-(5-phospho-D-ribosyl)imidazole from N(2)-formyl-N(1)-(5-phospho-D-ribosyl)glycinamide: step 2/2. The protein is Phosphoribosylformylglycinamidine cyclo-ligase of Xylella fastidiosa (strain Temecula1 / ATCC 700964).